The following is a 562-amino-acid chain: DNA ligase (562 aa).

E250 provides a ligand contact to ATP. K252 functions as the N6-AMP-lysine intermediate in the catalytic mechanism. ATP contacts are provided by R257, R272, E302, F342, R417, and K423.

This sequence belongs to the ATP-dependent DNA ligase family. Mg(2+) serves as cofactor. The cofactor is Zn(2+).

It carries out the reaction ATP + (deoxyribonucleotide)n-3'-hydroxyl + 5'-phospho-(deoxyribonucleotide)m = (deoxyribonucleotide)n+m + AMP + diphosphate.. The enzyme catalyses NAD(+) + (deoxyribonucleotide)n-3'-hydroxyl + 5'-phospho-(deoxyribonucleotide)m = (deoxyribonucleotide)n+m + AMP + beta-nicotinamide D-nucleotide.. DNA ligase that seals nicks in double-stranded DNA during DNA replication, DNA recombination and DNA repair. Can use both ATP and NAD(+), but NAD(+) may be a preferred nucleotide cofactor. The protein is DNA ligase of Thermococcus onnurineus (strain NA1).